The chain runs to 366 residues: UDP-N-acetylglucosamine--N-acetylmuramyl-(pentapeptide) pyrophosphoryl-undecaprenol N-acetylglucosamine transferase (366 aa).

UDP-N-acetyl-alpha-D-glucosamine contacts are provided by residues 14–16 (TGG), Asn125, Arg168, Ser196, and Gln297.

Belongs to the glycosyltransferase 28 family. MurG subfamily.

It localises to the cell inner membrane. It catalyses the reaction di-trans,octa-cis-undecaprenyl diphospho-N-acetyl-alpha-D-muramoyl-L-alanyl-D-glutamyl-meso-2,6-diaminopimeloyl-D-alanyl-D-alanine + UDP-N-acetyl-alpha-D-glucosamine = di-trans,octa-cis-undecaprenyl diphospho-[N-acetyl-alpha-D-glucosaminyl-(1-&gt;4)]-N-acetyl-alpha-D-muramoyl-L-alanyl-D-glutamyl-meso-2,6-diaminopimeloyl-D-alanyl-D-alanine + UDP + H(+). It participates in cell wall biogenesis; peptidoglycan biosynthesis. In terms of biological role, cell wall formation. Catalyzes the transfer of a GlcNAc subunit on undecaprenyl-pyrophosphoryl-MurNAc-pentapeptide (lipid intermediate I) to form undecaprenyl-pyrophosphoryl-MurNAc-(pentapeptide)GlcNAc (lipid intermediate II). The chain is UDP-N-acetylglucosamine--N-acetylmuramyl-(pentapeptide) pyrophosphoryl-undecaprenol N-acetylglucosamine transferase from Bradyrhizobium diazoefficiens (strain JCM 10833 / BCRC 13528 / IAM 13628 / NBRC 14792 / USDA 110).